We begin with the raw amino-acid sequence, 105 residues long: Serine protease inhibitor Kazal-type 8 (105 aa).

The signal sequence occupies residues methionine 1 to alanine 21. Intrachain disulfides connect cysteine 44–cysteine 78, cysteine 51–cysteine 75, and cysteine 64–cysteine 96. The 55-residue stretch at cysteine 44–histidine 98 folds into the Kazal-like domain.

Expressed in epydiymis, in the cauda, corpus and caput.

The protein resides in the secreted. In terms of biological role, probable serine protease inhibitor. This Mus musculus (Mouse) protein is Serine protease inhibitor Kazal-type 8 (Spink8).